The following is a 297-amino-acid chain: Phosphoribosylaminoimidazole-succinocarboxamide synthase (297 aa).

It belongs to the SAICAR synthetase family.

The catalysed reaction is 5-amino-1-(5-phospho-D-ribosyl)imidazole-4-carboxylate + L-aspartate + ATP = (2S)-2-[5-amino-1-(5-phospho-beta-D-ribosyl)imidazole-4-carboxamido]succinate + ADP + phosphate + 2 H(+). It participates in purine metabolism; IMP biosynthesis via de novo pathway; 5-amino-1-(5-phospho-D-ribosyl)imidazole-4-carboxamide from 5-amino-1-(5-phospho-D-ribosyl)imidazole-4-carboxylate: step 1/2. This chain is Phosphoribosylaminoimidazole-succinocarboxamide synthase, found in Mycobacterium tuberculosis (strain ATCC 25177 / H37Ra).